Reading from the N-terminus, the 167-residue chain is uncharacterized protein (167 aa).

The stretch at 28–59 (LTGIREELKADIDETRLIAESVLEEKEKKVVE) forms a coiled coil.

This is an uncharacterized protein from Aquifex aeolicus (strain VF5).